Consider the following 444-residue polypeptide: Zeaxanthin 4-ketolase (444 aa).

The segment at 408-444 (VAGGSSSGGGGEGGKPGAGEHGLLQRQRQLAPVGVMA) is disordered. Gly residues predominate over residues 412 to 427 (SSSGGGGEGGKPGAGE).

The enzyme catalyses all-trans-adonixanthin + 2 AH2 + 2 O2 = all-trans-(3S,3'S)-astaxanthin + 2 A + 3 H2O. The catalysed reaction is all-trans-zeaxanthin + 2 AH2 + 2 O2 = all-trans-adonixanthin + 2 A + 3 H2O. It carries out the reaction echinenone + 2 AH2 + 2 O2 = canthaxanthin + 2 A + 3 H2O. It catalyses the reaction all-trans-beta-carotene + 2 AH2 + 2 O2 = echinenone + 2 A + 3 H2O. It functions in the pathway carotenoid biosynthesis; astaxanthin biosynthesis. Functionally, involved in the biosynthesis of ketocarotenoids which are powerful anti-oxidative molecules. Catalyzes the conversion of zeaxanthin to astaxanthin via adonixanthin. Catalyzes the conversion of beta-carotene to canthaxanthin via echinenone. This Chlamydomonas reinhardtii (Chlamydomonas smithii) protein is Zeaxanthin 4-ketolase.